We begin with the raw amino-acid sequence, 265 residues long: Interleukin-1 alpha (265 aa).

Residues 1 to 108 (MAKVPDLFED…DTEEVIMKPR (108 aa)) constitute a propeptide that is removed on maturation. Lys-78 carries the N6-acetyllysine modification. A nuclear localization signal (NLS) region spans residues 78–82 (KKRRL). Ser-83 carries the post-translational modification Phosphoserine. Asn-98 and Asn-137 each carry an N-linked (GlcNAc...) asparagine glycan.

The protein belongs to the IL-1 family. In terms of assembly, monomer. Interacts with TMED10; the interaction mediates the translocation from the cytoplasm into the ERGIC (endoplasmic reticulum-Golgi intermediate compartment) and thereby secretion. Interacts with IL1R1. Interacts with S100A13; this interaction is the first step in the export of IL1A, followed by direct translocation of this complex across the plasma membrane. Post-translationally, acetylated within its nuclear localization sequence, which impacts subcellular localization. Proteolytic processed by CAPN1 in a calcium-dependent manner. Cleavage from 31 kDa precursor to 18 kDa biologically active molecules. In terms of processing, phosphorylated. Phosphorylation greatly enhances susceptibility to digestion and promotes the conversion of pre-IL1A alpha to the biologically active IL1A.

Its subcellular location is the nucleus. The protein resides in the cytoplasm. It is found in the secreted. Its function is as follows. Cytokine constitutively present intracellularly in nearly all resting non-hematopoietic cells that plays an important role in inflammation and bridges the innate and adaptive immune systems. After binding to its receptor IL1R1 together with its accessory protein IL1RAP, forms the high affinity interleukin-1 receptor complex. Signaling involves the recruitment of adapter molecules such as MYD88, IRAK1 or IRAK4. In turn, mediates the activation of NF-kappa-B and the three MAPK pathways p38, p42/p44 and JNK pathways. Within the cell, acts as an alarmin and cell death results in its liberation in the extracellular space after disruption of the cell membrane to induce inflammation and alert the host to injury or damage. In addition to its role as a danger signal, which occurs when the cytokine is passively released by cell necrosis, directly senses DNA damage and acts as signal for genotoxic stress without loss of cell integrity. This chain is Interleukin-1 alpha (IL1A), found in Canis lupus familiaris (Dog).